Here is a 217-residue protein sequence, read N- to C-terminus: Large ribosomal subunit protein uL4 (217 aa).

Residues 46–103 form a disordered region; that stretch reads KRQGTHATKTRGMVSGGGRKPFRQKGTGRARQGSIRAPHFTGGGTVHGPQPRDYSQRT.

Belongs to the universal ribosomal protein uL4 family. In terms of assembly, part of the 50S ribosomal subunit.

Functionally, one of the primary rRNA binding proteins, this protein initially binds near the 5'-end of the 23S rRNA. It is important during the early stages of 50S assembly. It makes multiple contacts with different domains of the 23S rRNA in the assembled 50S subunit and ribosome. Its function is as follows. Forms part of the polypeptide exit tunnel. The sequence is that of Large ribosomal subunit protein uL4 from Corynebacterium jeikeium (strain K411).